Consider the following 362-residue polypeptide: 3-dehydroquinate synthase (362 aa).

NAD(+) is bound by residues 71 to 76 (DGEQYK), 105 to 109 (GVVGD), 129 to 130 (TT), K142, K151, and 169 to 172 (CLKT). Zn(2+) contacts are provided by E184, H247, and H264.

Belongs to the sugar phosphate cyclases superfamily. Dehydroquinate synthase family. Co(2+) serves as cofactor. The cofactor is Zn(2+). NAD(+) is required as a cofactor.

Its subcellular location is the cytoplasm. The enzyme catalyses 7-phospho-2-dehydro-3-deoxy-D-arabino-heptonate = 3-dehydroquinate + phosphate. It participates in metabolic intermediate biosynthesis; chorismate biosynthesis; chorismate from D-erythrose 4-phosphate and phosphoenolpyruvate: step 2/7. Catalyzes the conversion of 3-deoxy-D-arabino-heptulosonate 7-phosphate (DAHP) to dehydroquinate (DHQ). This Escherichia coli (strain 55989 / EAEC) protein is 3-dehydroquinate synthase.